The primary structure comprises 728 residues: Magnetosome formation protease MamE (728 aa).

Residues 1–21 lie on the Cytoplasmic side of the membrane; the sequence is MAMFNGDVEDGGRGDASCGKD. A helical membrane pass occupies residues 22 to 42; that stretch reads LKRYLMLMGVVALVVLFGAFI. Residues 43-728 are Lumenal-facing; sequence YRQSSGGLRL…RNGQEFWIVL (686 aa). Catalysis depends on charge relay system residues histidine 188, aspartate 221, and serine 297. The MCR (magnetochrome) 1 signature appears at 375-398; that stretch reads IFAGTRAPHTDGRQNMDCTTCHDL. Cysteine 392, cysteine 395, histidine 396, cysteine 438, cysteine 441, and histidine 442 together coordinate heme. The MCR 2 motif lies at 421-444; sequence IPMGAVSPHTDGRQNMNCANCHQM. PDZ domains are found at residues 471–573 and 622–721; these read AINI…LRDG and PAVM…NRNG.

The protein in the N-terminal section; belongs to the peptidase S1C family. In terms of assembly, might interact with MamB via PDZ1. Heme serves as cofactor. Post-translationally, subject to autocatalytic cleavage; cleavage also requires MamO.

The protein localises to the magnetosome membrane. Its activity is regulated as follows. Autoproteolysis is stimulated by exogenous substrates or peptides that bind to its PDZ domains; may be stimulated by an environmental cue in vivo. Protease activity is tightly regulated; increasing its activity decreases substrate levels and disturbs biomineralization. Its function is as follows. Acts at 2 distinct steps of magnetosome formation; required for correct localization of proteins to the magnetosome while the protease activity is required for maturation of small magnetite crystals into larger, functional ones. The 2 functions are separable by mutation. Probably cleaves at least itself, MamO and MamP; cleavage requires the putative transport domain of MamO. Involved in localization of some proteins (at least MamA, MamC, MamF, MamI and MamJ) to the magnetosome. The polypeptide is Magnetosome formation protease MamE (mamE) (Paramagnetospirillum magneticum (strain ATCC 700264 / AMB-1) (Magnetospirillum magneticum)).